The following is a 327-amino-acid chain: MSHLAELVASAKAAISQASDVAALDNVRVEYLGKKGHLTLQMTTLRELPPEERPAAGAVINEAKEQVQQALNARKAELESAALNARLAAETIDVSLLGRRIENGGLHPVTRTIDRIESFFGELGFTVATGPEIEDDYHNFDALNIPGHHPARADHDTFWFDTTRLLRTQTSGVQIRTMKAQQPPIRIIAPGRVYRNDYDQTHTPMFHQMEGLIVDTNISFTNLKGTLHDFLRNFFEEDLQIRFRPSYFPFTEPSAEVDVMGKNGKWLEVLGCGMVHPNVLRNVGIDPEVYSGFAFGMGMERLTMLRYGVTDLRSFFENDLRFLKQFK.

Glu252 contributes to the Mg(2+) binding site.

This sequence belongs to the class-II aminoacyl-tRNA synthetase family. Phe-tRNA synthetase alpha subunit type 1 subfamily. Tetramer of two alpha and two beta subunits. The cofactor is Mg(2+).

The protein localises to the cytoplasm. The catalysed reaction is tRNA(Phe) + L-phenylalanine + ATP = L-phenylalanyl-tRNA(Phe) + AMP + diphosphate + H(+). The protein is Phenylalanine--tRNA ligase alpha subunit of Shigella sonnei (strain Ss046).